We begin with the raw amino-acid sequence, 112 residues long: Notch-regulated ankyrin repeat-containing protein A (112 aa).

ANK repeat units lie at residues 48-77 (EGQT…DIRL) and 81-110 (EGWS…YSSG).

The protein belongs to the NRARP family.

Its function is as follows. Regulates independently canonical Wnt and Notch signaling by modulating LEF1 and Notch protein turnover. Stabilizes LEF1, a pivotal transcription factor in the Wnt signaling cascade, by blocking its ubiquitination. Involved in angiogenesis; involved in intersegmental vessel patterning during development. The protein is Notch-regulated ankyrin repeat-containing protein A (nrarpa) of Danio rerio (Zebrafish).